We begin with the raw amino-acid sequence, 554 residues long: Alpha-taxilin (554 aa).

The segment at 1–66 is disordered; that stretch reads MKNQDKKNGP…ARAKAAQPGA (66 aa). Serine 71 is subject to Phosphoserine. Residues 85-166 are disordered; the sequence is YCVDNNQGGP…RRPQEKKKAK (82 aa). Positions 91 to 103 are enriched in low complexity; the sequence is QGGPAEEGAQGEP. The segment covering 143-158 has biased composition (basic and acidic residues); the sequence is EEIRASDEVGDRDHRR. Positions 186-491 form a coiled coil; sequence EEKLAALCKK…NKRVQDLTAG (306 aa). The disordered stretch occupies residues 492 to 554; it reads GITDIGSERR…GPGEPTPATA (63 aa). Phosphoserine is present on residues serine 515 and serine 523.

The protein belongs to the taxilin family. In terms of assembly, binds to the C-terminal coiled coil region of syntaxin family members STX1A, STX3A and STX4A, but not when these proteins are complexed with SNAP25, VAMP2 or STXBP1, suggesting that it interacts with syntaxins that do not form the SNARE complex.

Functionally, may be involved in intracellular vesicle traffic and potentially in calcium-dependent exocytosis in neuroendocrine cells. The polypeptide is Alpha-taxilin (Txlna) (Mus musculus (Mouse)).